The chain runs to 258 residues: 2-succinyl-6-hydroxy-2,4-cyclohexadiene-1-carboxylate synthase (258 aa).

It belongs to the AB hydrolase superfamily. MenH family. In terms of assembly, monomer.

It catalyses the reaction 5-enolpyruvoyl-6-hydroxy-2-succinyl-cyclohex-3-ene-1-carboxylate = (1R,6R)-6-hydroxy-2-succinyl-cyclohexa-2,4-diene-1-carboxylate + pyruvate. Its pathway is quinol/quinone metabolism; 1,4-dihydroxy-2-naphthoate biosynthesis; 1,4-dihydroxy-2-naphthoate from chorismate: step 3/7. It participates in quinol/quinone metabolism; menaquinone biosynthesis. Its function is as follows. Catalyzes a proton abstraction reaction that results in 2,5-elimination of pyruvate from 2-succinyl-5-enolpyruvyl-6-hydroxy-3-cyclohexene-1-carboxylate (SEPHCHC) and the formation of 2-succinyl-6-hydroxy-2,4-cyclohexadiene-1-carboxylate (SHCHC). The polypeptide is 2-succinyl-6-hydroxy-2,4-cyclohexadiene-1-carboxylate synthase (Enterobacter sp. (strain 638)).